The sequence spans 427 residues: Glutamate-1-semialdehyde 2,1-aminomutase 1 (427 aa).

K267 bears the N6-(pyridoxal phosphate)lysine mark.

This sequence belongs to the class-III pyridoxal-phosphate-dependent aminotransferase family. HemL subfamily. Homodimer. Requires pyridoxal 5'-phosphate as cofactor.

It localises to the cytoplasm. It catalyses the reaction (S)-4-amino-5-oxopentanoate = 5-aminolevulinate. The protein operates within porphyrin-containing compound metabolism; protoporphyrin-IX biosynthesis; 5-aminolevulinate from L-glutamyl-tRNA(Glu): step 2/2. The polypeptide is Glutamate-1-semialdehyde 2,1-aminomutase 1 (Staphylococcus epidermidis (strain ATCC 35984 / DSM 28319 / BCRC 17069 / CCUG 31568 / BM 3577 / RP62A)).